The sequence spans 179 residues: Large ribosomal subunit protein uL5 (179 aa).

As to quaternary structure, contacts the P site tRNA. Forms a bridge to the 30S subunit in the 70S ribosome. Part of the 50S ribosomal subunit. Part of the 5S rRNA/L5/L18 subcomplex; in this organism only 2 proteins, L5 and L18 have been shown to be part of the 5S rRNA subcomplex, unlike E.coli and T.thermophilus where L25 (TL5) is also found. Has been shown to bind 5S rRNA.

Functionally, this is one of the proteins that bind and probably mediate the attachment of the 5S RNA into the large ribosomal subunit, where it forms part of the central protuberance. In the 70S ribosome it contacts protein S13 of the 30S subunit (bridge B1b), connecting the 2 subunits; this bridge is implicated in subunit movement. Contacts the P site tRNA; the 5S rRNA and some of its associated proteins might help stabilize positioning of ribosome-bound tRNAs. This chain is Large ribosomal subunit protein uL5 (rplE), found in Geobacillus stearothermophilus (Bacillus stearothermophilus).